The following is a 135-amino-acid chain: Transcription antitermination protein NusB (135 aa).

It belongs to the NusB family.

Functionally, involved in transcription antitermination. Required for transcription of ribosomal RNA (rRNA) genes. Binds specifically to the boxA antiterminator sequence of the ribosomal RNA (rrn) operons. This is Transcription antitermination protein NusB from Shewanella halifaxensis (strain HAW-EB4).